Consider the following 731-residue polypeptide: Inclusion body clearance protein IML2 (731 aa).

The tract at residues 1–26 is disordered; the sequence is MFRVFGSFGSKGNQSSGEEQSTKTKQ. Over residues 10 to 26 the composition is skewed to polar residues; sequence SKGNQSSGEEQSTKTKQ. Phosphoserine is present on residues Ser-265, Ser-268, and Ser-378. Position 380 is a phosphothreonine (Thr-380). Phosphoserine is present on residues Ser-383 and Ser-392.

Belongs to the IML2 family. In terms of assembly, interacts with lipid droplet proteins PET10 and PDR16.

Its subcellular location is the cytoplasm. It is found in the nucleus. In terms of biological role, inclusion body (IB) resident protein that interacts strongly with lipid droplet (LD) proteins. Involved in LD-mediated IB clearing after protein folding stress, probably by enabling access to the IBs of an LD-stored soluble sterol derivative that acts as a chaperone in inclusion clearing. The sequence is that of Inclusion body clearance protein IML2 (IML2) from Saccharomyces cerevisiae (strain YJM789) (Baker's yeast).